A 176-amino-acid polypeptide reads, in one-letter code: Large ribosomal subunit protein uL10 (176 aa).

Belongs to the universal ribosomal protein uL10 family. In terms of assembly, part of the ribosomal stalk of the 50S ribosomal subunit. The N-terminus interacts with L11 and the large rRNA to form the base of the stalk. The C-terminus forms an elongated spine to which L12 dimers bind in a sequential fashion forming a multimeric L10(L12)X complex.

Forms part of the ribosomal stalk, playing a central role in the interaction of the ribosome with GTP-bound translation factors. The chain is Large ribosomal subunit protein uL10 from Carboxydothermus hydrogenoformans (strain ATCC BAA-161 / DSM 6008 / Z-2901).